Consider the following 278-residue polypeptide: 2-(acetamidomethylene)succinate hydrolase (278 aa).

Residues Ile-41 and 106 to 107 (SL) each bind chloride. Ser-106 serves as the catalytic Nucleophile. Active-site residues include Asp-130 and His-258.

The protein belongs to the AB hydrolase superfamily. In terms of assembly, homodimer.

It catalyses the reaction 2-(acetamidomethylene)succinate + 2 H2O + H(+) = succinate semialdehyde + acetate + NH4(+) + CO2. The protein operates within cofactor degradation; B6 vitamer degradation. Functionally, catalyzes the final reaction in the degradation of vitamin B6 from (E)-2-(acetamidomethylene)succinate (E-2AMS) to produce succinic semialdehyde, acetate, ammonia and carbon dioxide. This Mesorhizobium japonicum (strain LMG 29417 / CECT 9101 / MAFF 303099) (Mesorhizobium loti (strain MAFF 303099)) protein is 2-(acetamidomethylene)succinate hydrolase.